A 220-amino-acid chain; its full sequence is Uracil-DNA glycosylase 1 (220 aa).

The active-site Proton acceptor is the D65.

This sequence belongs to the uracil-DNA glycosylase (UDG) superfamily. UNG family.

It is found in the cytoplasm. The enzyme catalyses Hydrolyzes single-stranded DNA or mismatched double-stranded DNA and polynucleotides, releasing free uracil.. In terms of biological role, excises uracil residues from the DNA which can arise as a result of misincorporation of dUMP residues by DNA polymerase or due to deamination of cytosine. This is Uracil-DNA glycosylase 1 from Bacteroides fragilis (strain YCH46).